Reading from the N-terminus, the 660-residue chain is tRNA 5-methylaminomethyl-2-thiouridine biosynthesis bifunctional protein MnmC (660 aa).

Residues 1-242 are tRNA (mnm(5)s(2)U34)-methyltransferase; that stretch reads MTDRIVPATL…KRAMLVGEFA (242 aa). An FAD-dependent cmnm(5)s(2)U34 oxidoreductase region spans residues 266–660; sequence IGAGLAGCAV…VRALRHGRVA (395 aa).

In the N-terminal section; belongs to the methyltransferase superfamily. tRNA (mnm(5)s(2)U34)-methyltransferase family. The protein in the C-terminal section; belongs to the DAO family. It depends on FAD as a cofactor.

It localises to the cytoplasm. The enzyme catalyses 5-aminomethyl-2-thiouridine(34) in tRNA + S-adenosyl-L-methionine = 5-methylaminomethyl-2-thiouridine(34) in tRNA + S-adenosyl-L-homocysteine + H(+). In terms of biological role, catalyzes the last two steps in the biosynthesis of 5-methylaminomethyl-2-thiouridine (mnm(5)s(2)U) at the wobble position (U34) in tRNA. Catalyzes the FAD-dependent demodification of cmnm(5)s(2)U34 to nm(5)s(2)U34, followed by the transfer of a methyl group from S-adenosyl-L-methionine to nm(5)s(2)U34, to form mnm(5)s(2)U34. This Burkholderia pseudomallei (strain 1106a) protein is tRNA 5-methylaminomethyl-2-thiouridine biosynthesis bifunctional protein MnmC.